Reading from the N-terminus, the 181-residue chain is Ribonuclease HII (181 aa).

The 181-residue stretch at 1-181 (MICGIDEVGR…SLHRRNFKLI (181 aa)) folds into the RNase H type-2 domain. Residues D6, E7, and D98 each contribute to the a divalent metal cation site.

Belongs to the RNase HII family. Mn(2+) serves as cofactor. Requires Mg(2+) as cofactor.

The protein localises to the cytoplasm. It catalyses the reaction Endonucleolytic cleavage to 5'-phosphomonoester.. In terms of biological role, endonuclease that specifically degrades the RNA of RNA-DNA hybrids. This is Ribonuclease HII from Borrelia garinii subsp. bavariensis (strain ATCC BAA-2496 / DSM 23469 / PBi) (Borreliella bavariensis).